A 216-amino-acid polypeptide reads, in one-letter code: Peptide methionine sulfoxide reductase MsrA (216 aa).

The active site involves Cys-54.

This sequence belongs to the MsrA Met sulfoxide reductase family.

The enzyme catalyses L-methionyl-[protein] + [thioredoxin]-disulfide + H2O = L-methionyl-(S)-S-oxide-[protein] + [thioredoxin]-dithiol. It carries out the reaction [thioredoxin]-disulfide + L-methionine + H2O = L-methionine (S)-S-oxide + [thioredoxin]-dithiol. Functionally, has an important function as a repair enzyme for proteins that have been inactivated by oxidation. Catalyzes the reversible oxidation-reduction of methionine sulfoxide in proteins to methionine. The sequence is that of Peptide methionine sulfoxide reductase MsrA from Xanthomonas campestris pv. campestris (strain ATCC 33913 / DSM 3586 / NCPPB 528 / LMG 568 / P 25).